Here is a 332-residue protein sequence, read N- to C-terminus: Protein FAM131B (332 aa).

The disordered stretch occupies residues 1–22 (MDSTSSLHGSSLHRPSTEQTRT). Phosphoserine is present on Ser47. Residues 95 to 114 (PTIQPQHSHEAVRRDTDAYS) are disordered. Residues 101-111 (HSHEAVRRDTD) are compositionally biased toward basic and acidic residues. Phosphoserine is present on residues Ser114 and Ser117. Residues 221–332 (LGPAFDDSQP…FDEEEGDANN (112 aa)) are disordered. 2 stretches are compositionally biased toward basic and acidic residues: residues 272 to 281 (PVEEEKRPLA) and 288 to 302 (AGCR…REDP). Ser295, Ser297, and Ser313 each carry phosphoserine. Thr316 is subject to Phosphothreonine. Phosphoserine occurs at positions 317, 318, and 322. Residues 323-332 (FDEEEGDANN) show a composition bias toward acidic residues.

It belongs to the FAM131 family.

The chain is Protein FAM131B (Fam131b) from Mus musculus (Mouse).